We begin with the raw amino-acid sequence, 931 residues long: Netrin receptor UNC5C (931 aa).

The signal sequence occupies residues 1-39 (MGKGLEGTAARCGLGMGYLLHSVVLPALAVLGASRPGSA). Residues 40–380 (AQDDDFFHEL…APDSDDVALY (341 aa)) lie on the Extracellular side of the membrane. The 98-residue stretch at 62 to 159 (PHFLIEPEEA…AGTTKSRKAY (98 aa)) folds into the Ig-like domain. 9 disulfides stabilise this stretch: cysteine 83/cysteine 144, cysteine 95/cysteine 142, cysteine 188/cysteine 239, cysteine 272/cysteine 309, cysteine 276/cysteine 313, cysteine 287/cysteine 299, cysteine 328/cysteine 362, cysteine 332/cysteine 367, and cysteine 340/cysteine 352. An Ig-like C2-type domain is found at 161 to 256 (RIAYLRKTFE…KRKSTTATVI (96 aa)). Asparagine 236 carries N-linked (GlcNAc...) asparagine glycosylation. TSP type-1 domains follow at residues 260-314 (NGGW…TLCP) and 316-368 (DGKW…GLCM). Asparagine 361 carries N-linked (GlcNAc...) asparagine glycosylation. A helical membrane pass occupies residues 381 to 401 (VGIVIAVIVCLAISVVVALFV). Residues 402-931 (YRKNHRDFES…VVSLAAEGNY (530 aa)) are Cytoplasmic-facing. A ZU5 domain is found at 530 to 664 (CTAFGTFNSL…EACHILTETL (135 aa)). The Death domain occupies 850-929 (QKLCSSLDAP…ETVVSLAAEG (80 aa)).

The protein belongs to the unc-5 family. Restricted to proprioceptive neurons.

It is found in the cell membrane. The protein localises to the cell surface. It localises to the synapse. Its subcellular location is the synaptosome. The protein resides in the cell projection. It is found in the axon. The protein localises to the dendrite. It localises to the growth cone. Its subcellular location is the lamellipodium. The protein resides in the filopodium. Receptor for netrin required for axon guidance. Mediates axon repulsion of neuronal growth cones in the developing nervous system upon ligand binding. Involved in dorsal root ganglion axon projection towards the spinal cord. This chain is Netrin receptor UNC5C (UNC5C), found in Gallus gallus (Chicken).